We begin with the raw amino-acid sequence, 123 residues long: T-complex protein 1 subunit alpha (123 aa).

Residue G68 participates in ADP binding.

It belongs to the TCP-1 chaperonin family. In terms of assembly, component of the chaperonin-containing T-complex (TRiC), a hexadecamer composed of two identical back-to-back stacked rings enclosing a protein folding chamber. Each ring is made up of eight different subunits: TCP1/CCT1, CCT2, CCT3, CCT4, CCT5, CCT6A/CCT6, CCT7, CCT8. Interacts with PACRG. Interacts with GBA1. Interacts with DLEC1.

The protein resides in the cytoplasm. The protein localises to the cytosol. Its subcellular location is the cytoskeleton. It localises to the microtubule organizing center. It is found in the centrosome. It catalyses the reaction ATP + H2O = ADP + phosphate + H(+). Functionally, component of the chaperonin-containing T-complex (TRiC), a molecular chaperone complex that assists the folding of actin, tubulin and other proteins upon ATP hydrolysis. The TRiC complex mediates the folding of WRAP53/TCAB1, thereby regulating telomere maintenance. As part of the TRiC complex may play a role in the assembly of BBSome, a complex involved in ciliogenesis regulating transports vesicles to the cilia. The polypeptide is T-complex protein 1 subunit alpha (Mesocricetus auratus (Golden hamster)).